Reading from the N-terminus, the 383-residue chain is tRNA pseudouridine synthase B (383 aa).

The active-site Nucleophile is aspartate 53.

It belongs to the pseudouridine synthase TruB family. Type 1 subfamily.

The catalysed reaction is uridine(55) in tRNA = pseudouridine(55) in tRNA. Its function is as follows. Responsible for synthesis of pseudouridine from uracil-55 in the psi GC loop of transfer RNAs. The polypeptide is tRNA pseudouridine synthase B (Tropheryma whipplei (strain TW08/27) (Whipple's bacillus)).